Here is a 1623-residue protein sequence, read N- to C-terminus: MRKRHLRLGQQMWALLCKNWLRKFRMRRETLLEWLFSLLLILFVYQLSSNLHQVHDAPEMSVVDLGRVDNFNDSNYMMVFAPESEATHEIMNKVASAPFMKGRTIVACPDEKSMNELDLNYSIDAVRVIFKDTFSYHLKFSWGQRIPKTKEHKDHSAPCEPLNNKMICENSAFWEKGFVAFQAAINAGIIEMITNHSVMEELMSVIGSNMKMPPFIAQGGVATDFFIFFCVISFSSLIYYLSVNITQERQYMTTLMAMMGLRESAFWLSWSLMYAGFILVVAVLMSLIVKSAQVVVLTGFMVVFLLFLFYGLSLITLSFLMSVLIKKPFLTGLAIFILTVFWGSLGFTALYKHLPAFVEWTLCFLSPFAFTTGMAQLIHLDYDVNSNVNLNSPNNSYLIMATLFMLVLDALLYLVLALYFDKITLSKYGHQRSPLFFLKSSYWFKRRGASHVVLENEIDSDPSLNDSLEPVSPEFQGKEAIRIKNLKKEYSGKHGKVEALRGLGFDIYEGQITALLGHSGAGKTTLINTLSGLSPPTTGSVTIYNQTVSEMDDSDAVLTITGVCPQSNVQFGFLTVRENLRLFAKIKGILPHEVEQEVQQVLQDLEMENIQDILAQNLSGGQKRKLTLGIAILGDPQVLLLDEPTAGLDPLSRHRIWNLLKERRAGRVIVFSTQFMDEADILADRKVFISNGRLKCAGSSLFLKKKWGIGYHLSLHLNEACDPEGITSLVKKHISDARLTTQSEERLVYILPLERTNKFPDLYRDLDRCSNQGIEDYGVSMTTLNEVFLKLEGKSMADESDVGICGRLQSDGARDMESLVELEQVLSLDSSGSSVSGMALWRQQLCAVAKVRFFKLKNERKSLMTVLLLFGISFVPQLLEHLVYKVYHKSYSWGLSPSMYFLSPGQPPQDPLTHLLVINRTGSSIDNFVHALRQQGIALDLDALGTRNGTEEALYNGAITVLGEEKALRFSVACNAKRLNCFPVLMDIISNGLLGIFNSSERIQTDRSTVFEEHMLYEYGFMSNAFFWIPVAASLTPYIAMGSISDHKKKVLSQLWTSGLYPSAYWCGQALVDIPIYFLILFLMQIMDSVFSSEEFISVMESLLIQIPCSIGYASSLIFMTYVISFIFRNGRKNSGIWSFFFLIVTIFFIIATDINEYGFLELLICTFLVPPFTLIGSLLIFSEVSYDSVDYLGTSESQLVFLALLIPYLHFLLFFFILRCLERYLRKKSLRVDPVFRISPRSCPAVPNPEEPGEEDEDVQMERVRTTGAMATLQTDEKPVIIASCLRKEYIGRTKRCFSKMKKKIATRNISFCVKKGEVLGLLGHNGAGKSTTISMITGDTIPTAGQVFLKGSGGGAALGFLGYCPQENVLWPNLTVKEHLELYAAVKGLKKKDAVVTITRLVNALKLQDHLKALVRTLSEGVKRKLCFVLSILGNPPVVLLDEPSTGMDPEGQQQMWQAIRATFTNTERGALLTTHYMAEAEAVCDRVAIMVSGRLRCIGSIQHLKSKFGKDYLLEMKVKTPSQVEPLNTEIMRLFPQAARQERYSSLMVYKLPVEDVRPLSEAFFKLERLKENFDLEEYSLSQSTLEQVFLELSKEQELDDFGEEANSSVKWKLLPQEEL.

A helical transmembrane segment spans residues 31–51 (LLEWLFSLLLILFVYQLSSNL). N120 carries an N-linked (GlcNAc...) asparagine glycan. The next 6 helical transmembrane spans lie at 225–245 (FFIF…SVNI), 265–285 (AFWL…AVLM), 295–315 (VVLT…LSLI), 329–349 (FLTG…GFTA), 354–374 (LPAF…TTGM), and 398–418 (LIMA…VLAL). Residues 481 to 716 (IRIKNLKKEY…WGIGYHLSLH (236 aa)) form the ABC transporter 1 domain. 517 to 524 (GHSGAGKT) provides a ligand contact to ATP. The next 7 helical transmembrane spans lie at 863–883 (LMTV…EHLV), 1025–1045 (AFFW…GSIS), 1071–1091 (LVDI…DSVF), 1107–1127 (IPCS…ISFI), 1135–1155 (SGIW…ATDI), 1163–1183 (LLIC…LIFS), and 1199–1219 (QLVF…FFIL). An ABC transporter 2 domain is found at 1287–1520 (LRKEYIGRTK…FGKDYLLEMK (234 aa)). 1325–1332 (GHNGAGKS) serves as a coordination point for ATP.

Belongs to the ABC transporter superfamily. ABCA family. In terms of tissue distribution, highly expressed in heart and to lower extent in kidney, brain and spleen. Weakly expressed in developing and adult brains. Weakly expressed in the cerebellar granular layer at P14 and P21.

The protein localises to the membrane. Functionally, transporter that may play a role in monocyte differentiation and lipid transport and homeostasis. In Mus musculus (Mouse), this protein is ATP-binding cassette sub-family A member 9 (Abca9).